The primary structure comprises 235 residues: Orotidine 5'-phosphate decarboxylase (235 aa).

Residues Asp17, Lys39, 66 to 75 (DMKLLDIDHT), Thr121, Arg182, Gln191, and Arg212 contribute to the substrate site. Lys68 functions as the Proton donor in the catalytic mechanism.

This sequence belongs to the OMP decarboxylase family. Type 1 subfamily. In terms of assembly, homodimer.

It catalyses the reaction orotidine 5'-phosphate + H(+) = UMP + CO2. Its pathway is pyrimidine metabolism; UMP biosynthesis via de novo pathway; UMP from orotate: step 2/2. Catalyzes the decarboxylation of orotidine 5'-monophosphate (OMP) to uridine 5'-monophosphate (UMP). This is Orotidine 5'-phosphate decarboxylase from Bartonella bacilliformis.